The primary structure comprises 203 residues: V-type ATP synthase subunit D (203 aa).

The protein belongs to the V-ATPase D subunit family.

Functionally, produces ATP from ADP in the presence of a proton gradient across the membrane. The protein is V-type ATP synthase subunit D of Streptococcus pneumoniae serotype 19F (strain G54).